A 341-amino-acid polypeptide reads, in one-letter code: Probable electron transfer flavoprotein subunit alpha, mitochondrial (341 aa).

285–313 (LYIAVGIDGAIQHLAGIKDSKVIAAINRD) serves as a coordination point for FAD.

The protein belongs to the ETF alpha-subunit/FixB family. Heterodimer of an alpha and a beta subunit. FAD serves as cofactor.

Its subcellular location is the mitochondrion matrix. The electron transfer flavoprotein serves as a specific electron acceptor for several dehydrogenases, including five acyl-CoA dehydrogenases, glutaryl-CoA and sarcosine dehydrogenase. It transfers the electrons to the main mitochondrial respiratory chain via ETF-ubiquinone oxidoreductase (ETF dehydrogenase). The protein is Probable electron transfer flavoprotein subunit alpha, mitochondrial of Schizosaccharomyces pombe (strain 972 / ATCC 24843) (Fission yeast).